Consider the following 664-residue polypeptide: Methionine--tRNA ligase (664 aa).

Residues 15–25 (YYPSGKLHIGH) carry the 'HIGH' region motif. The short motif at 311–315 (KMSKS) is the 'KMSKS' region element. Lysine 314 serves as a coordination point for ATP. A disordered region spans residues 536–556 (MQGSAPAKEETKEEEPQEVDR). The tRNA-binding domain occupies 570–662 (LRVAEVIEAE…IDQSLPKGTR (93 aa)).

Belongs to the class-I aminoacyl-tRNA synthetase family. MetG type 2B subfamily. As to quaternary structure, homodimer.

The protein localises to the cytoplasm. The catalysed reaction is tRNA(Met) + L-methionine + ATP = L-methionyl-tRNA(Met) + AMP + diphosphate. Functionally, is required not only for elongation of protein synthesis but also for the initiation of all mRNA translation through initiator tRNA(fMet) aminoacylation. The polypeptide is Methionine--tRNA ligase (metG) (Bacillus subtilis (strain 168)).